The sequence spans 630 residues: tRNA uridine 5-carboxymethylaminomethyl modification enzyme MnmG (630 aa).

15–20 (GAGHAG) lines the FAD pocket. An NAD(+)-binding site is contributed by 274 to 288 (GPRYCPSIEDKIVRF).

It belongs to the MnmG family. As to quaternary structure, homodimer. Heterotetramer of two MnmE and two MnmG subunits. It depends on FAD as a cofactor.

The protein localises to the cytoplasm. In terms of biological role, NAD-binding protein involved in the addition of a carboxymethylaminomethyl (cmnm) group at the wobble position (U34) of certain tRNAs, forming tRNA-cmnm(5)s(2)U34. The protein is tRNA uridine 5-carboxymethylaminomethyl modification enzyme MnmG of Alkaliphilus oremlandii (strain OhILAs) (Clostridium oremlandii (strain OhILAs)).